Here is a 387-residue protein sequence, read N- to C-terminus: Protein BTN1 (387 aa).

A signal peptide spans M1–A31. Transmembrane regions (helical) follow at residues I43–V63, I72–W92, L93–L113, S129–F149, L151–Y171, T225–I245, Y257–H276, L278–L298, S308–V328, and L347–I367.

Belongs to the battenin family.

It localises to the vacuole membrane. In terms of biological role, involved in vacuolar transport and vacuole pH homeostasis. Also required for cytokinesis. This chain is Protein BTN1 (BTN1), found in Kluyveromyces lactis (strain ATCC 8585 / CBS 2359 / DSM 70799 / NBRC 1267 / NRRL Y-1140 / WM37) (Yeast).